The primary structure comprises 328 residues: Tryptophan--tRNA ligase (328 aa).

Residues Gln-11 to Thr-13 and Gly-19 to Asn-20 contribute to the ATP site. A 'HIGH' region motif is present at residues Pro-12–Asn-20. Asp-135 lines the L-tryptophan pocket. Residues Gly-147–Asp-149, Ile-186, and Lys-195–Ser-199 each bind ATP. The short motif at Lys-195–Ser-199 is the 'KMSKS' region element.

The protein belongs to the class-I aminoacyl-tRNA synthetase family. As to quaternary structure, homodimer.

Its subcellular location is the cytoplasm. The catalysed reaction is tRNA(Trp) + L-tryptophan + ATP = L-tryptophyl-tRNA(Trp) + AMP + diphosphate + H(+). Its function is as follows. Catalyzes the attachment of tryptophan to tRNA(Trp). The polypeptide is Tryptophan--tRNA ligase (Wolinella succinogenes (strain ATCC 29543 / DSM 1740 / CCUG 13145 / JCM 31913 / LMG 7466 / NCTC 11488 / FDC 602W) (Vibrio succinogenes)).